The chain runs to 431 residues: Divalent metal cation transporter MntH (431 aa).

A run of 12 helical transmembrane segments spans residues 30 to 50 (WSWT…IDPG), 63 to 83 (GYTL…IQTL), 106 to 126 (PLVW…DLAE), 137 to 159 (LFGL…ALHL), 169 to 189 (ILIG…LVLS), 209 to 229 (YALY…VIYL), 257 to 277 (VILG…MAAA), 287 to 307 (VATI…VTAS), 309 to 329 (VFGL…TLSG), 341 to 361 (IPLW…IMLG), 367 to 387 (ALVA…VPLL), and 405 to 425 (VTGV…YVLF).

Belongs to the NRAMP family.

The protein localises to the cell inner membrane. In terms of biological role, h(+)-stimulated, divalent metal cation uptake system. The polypeptide is Divalent metal cation transporter MntH (Chromohalobacter salexigens (strain ATCC BAA-138 / DSM 3043 / CIP 106854 / NCIMB 13768 / 1H11)).